We begin with the raw amino-acid sequence, 132 residues long: Small ribosomal subunit protein uS8 (132 aa).

It belongs to the universal ribosomal protein uS8 family. Part of the 30S ribosomal subunit. Contacts proteins S5 and S12.

Its function is as follows. One of the primary rRNA binding proteins, it binds directly to 16S rRNA central domain where it helps coordinate assembly of the platform of the 30S subunit. The polypeptide is Small ribosomal subunit protein uS8 (Flavobacterium johnsoniae (strain ATCC 17061 / DSM 2064 / JCM 8514 / BCRC 14874 / CCUG 350202 / NBRC 14942 / NCIMB 11054 / UW101) (Cytophaga johnsonae)).